A 552-amino-acid polypeptide reads, in one-letter code: Putative phosphate permease MT2339 (552 aa).

13 helical membrane passes run 38-58, 69-89, 107-127, 146-166, 178-198, 213-233, 326-346, 360-380, 389-409, 437-457, 472-492, 493-513, and 526-546; these read WHLSFSLLLAGSFVLFSWWAF, ILVLATVVGMFMAFNVGGNDV, ALLVAAIFEVSGAVIAGGDVT, DFMNIMLSALSAAALWLLFAN, IIGGIVGAAIALGMVSGQGGA, VSWVLSPVLGGLVSYLLYGVI, VPLVAAAGSMIIVAMLLFKGF, FIIAMVGAAVWMATFIFAKTL, TFLMFSWMQVFTASGFAFSHG, AVPAAAMVTFGVALCAGLWFI, MHPASGFAAELSAAGVVMGAT, VLGLPVSSTHILIGAVLGVGI, and IVLAWVITLPSAAILASVGLV.

Belongs to the inorganic phosphate transporter (PiT) (TC 2.A.20) family.

The protein localises to the cell membrane. Potential transporter for phosphate. This chain is Putative phosphate permease MT2339, found in Mycobacterium tuberculosis (strain CDC 1551 / Oshkosh).